A 154-amino-acid polypeptide reads, in one-letter code: 6,7-dimethyl-8-ribityllumazine synthase (154 aa).

5-amino-6-(D-ribitylamino)uracil-binding positions include Phe22, 56–58 (SFE), and 81–83 (VLI). 86-87 (ET) provides a ligand contact to (2S)-2-hydroxy-3-oxobutyl phosphate. Catalysis depends on His89, which acts as the Proton donor. Phe114 contributes to the 5-amino-6-(D-ribitylamino)uracil binding site. (2S)-2-hydroxy-3-oxobutyl phosphate is bound at residue Arg128.

It belongs to the DMRL synthase family.

The catalysed reaction is (2S)-2-hydroxy-3-oxobutyl phosphate + 5-amino-6-(D-ribitylamino)uracil = 6,7-dimethyl-8-(1-D-ribityl)lumazine + phosphate + 2 H2O + H(+). The protein operates within cofactor biosynthesis; riboflavin biosynthesis; riboflavin from 2-hydroxy-3-oxobutyl phosphate and 5-amino-6-(D-ribitylamino)uracil: step 1/2. Its function is as follows. Catalyzes the formation of 6,7-dimethyl-8-ribityllumazine by condensation of 5-amino-6-(D-ribitylamino)uracil with 3,4-dihydroxy-2-butanone 4-phosphate. This is the penultimate step in the biosynthesis of riboflavin. The polypeptide is 6,7-dimethyl-8-ribityllumazine synthase (Chlamydia felis (strain Fe/C-56) (Chlamydophila felis)).